A 429-amino-acid polypeptide reads, in one-letter code: Enolase (429 aa).

(2R)-2-phosphoglycerate is bound at residue Q163. Residue E205 is the Proton donor of the active site. Residues D242, E287, and D314 each coordinate Mg(2+). Positions 339, 368, 369, and 390 each coordinate (2R)-2-phosphoglycerate. K339 serves as the catalytic Proton acceptor.

It belongs to the enolase family. The cofactor is Mg(2+).

It is found in the cytoplasm. It localises to the secreted. The protein localises to the cell surface. It catalyses the reaction (2R)-2-phosphoglycerate = phosphoenolpyruvate + H2O. It functions in the pathway carbohydrate degradation; glycolysis; pyruvate from D-glyceraldehyde 3-phosphate: step 4/5. Its function is as follows. Catalyzes the reversible conversion of 2-phosphoglycerate (2-PG) into phosphoenolpyruvate (PEP). It is essential for the degradation of carbohydrates via glycolysis. This chain is Enolase, found in Cupriavidus pinatubonensis (strain JMP 134 / LMG 1197) (Cupriavidus necator (strain JMP 134)).